Consider the following 498-residue polypeptide: Cytochrome P450 71B5 (498 aa).

The chain crosses the membrane as a helical span at residues I3–P23. C439 provides a ligand contact to heme.

The protein belongs to the cytochrome P450 family. Requires heme as cofactor.

Its subcellular location is the membrane. The sequence is that of Cytochrome P450 71B5 (CYP71B5) from Arabidopsis thaliana (Mouse-ear cress).